The sequence spans 367 residues: Uroporphyrinogen decarboxylase (367 aa).

Met1 is modified (N-acetylmethionine). Residues Arg37, Ala39, Arg41, Arg50, Asp86, Tyr164, Ser219, and His339 each contribute to the coproporphyrinogen I site. Positions 37, 39, and 41 each coordinate coproporphyrinogen III. Coproporphyrinogen III is bound by residues Asp86, Tyr164, Ser219, and His339.

It belongs to the uroporphyrinogen decarboxylase family. Homodimer.

It is found in the cytoplasm. It localises to the cytosol. It carries out the reaction uroporphyrinogen III + 4 H(+) = coproporphyrinogen III + 4 CO2. The enzyme catalyses uroporphyrinogen I + 4 H(+) = coproporphyrinogen I + 4 CO2. It functions in the pathway porphyrin-containing compound metabolism; protoporphyrin-IX biosynthesis; coproporphyrinogen-III from 5-aminolevulinate: step 4/4. Its function is as follows. Catalyzes the sequential decarboxylation of the four acetate side chains of uroporphyrinogen to form coproporphyrinogen and participates in the fifth step in the heme biosynthetic pathway. Isomer I or isomer III of uroporphyrinogen may serve as substrate, but only coproporphyrinogen III can ultimately be converted to heme. In vitro also decarboxylates pentacarboxylate porphyrinogen I. This chain is Uroporphyrinogen decarboxylase, found in Homo sapiens (Human).